The sequence spans 117 residues: Large ribosomal subunit protein uL18 (117 aa).

The protein belongs to the universal ribosomal protein uL18 family. As to quaternary structure, part of the 50S ribosomal subunit; part of the 5S rRNA/L5/L18/L25 subcomplex. Contacts the 5S and 23S rRNAs.

In terms of biological role, this is one of the proteins that bind and probably mediate the attachment of the 5S RNA into the large ribosomal subunit, where it forms part of the central protuberance. In Pectobacterium carotovorum subsp. carotovorum (strain PC1), this protein is Large ribosomal subunit protein uL18.